We begin with the raw amino-acid sequence, 877 residues long: DNA mismatch repair protein MutS (877 aa).

627–634 (GPNMAGKS) lines the ATP pocket.

This sequence belongs to the DNA mismatch repair MutS family.

This protein is involved in the repair of mismatches in DNA. It is possible that it carries out the mismatch recognition step. This protein has a weak ATPase activity. The chain is DNA mismatch repair protein MutS from Dinoroseobacter shibae (strain DSM 16493 / NCIMB 14021 / DFL 12).